Reading from the N-terminus, the 932-residue chain is ER degradation-enhancing alpha-mannosidase-like protein 3 (932 aa).

An N-terminal signal peptide occupies residues 1–41 (MSEAGGRGCGSPVPQRARWRLVAATAAFCLVSATSVWTAGA). Asparagine 118 is a glycosylation site (N-linked (GlcNAc...) asparagine). Residue glutamate 146 is the Proton donor of the active site. Asparagine 195 is a glycosylation site (N-linked (GlcNAc...) asparagine). Aspartate 293 is an active-site residue. Glutamate 387 serves as the catalytic Proton donor. Glutamate 405 is a catalytic residue. Ca(2+) is bound at residue threonine 491. N-linked (GlcNAc...) asparagine glycans are attached at residues asparagine 504 and asparagine 511. A PA domain is found at 674–779 (LSKHKETRGF…KEGSIILDAI (106 aa)). Residues 790 to 799 (SDKAKDRDPE) are compositionally biased toward basic and acidic residues. The segment at 790–908 (SDKAKDRDPE…PNVSWGKKVQ (119 aa)) is disordered. Asparagine 810 and asparagine 814 each carry an N-linked (GlcNAc...) asparagine glycan. Low complexity predominate over residues 812 to 825 (SQNQSGEQISSSSQ). Residues 856 to 890 (ASISPSEQTSNPTENHETTNLNGECTDLDNQLQEQ) show a composition bias toward polar residues. A glycan (N-linked (GlcNAc...) asparagine) is linked at asparagine 900. A Prevents secretion from ER motif is present at residues 929 to 932 (KDEL).

This sequence belongs to the glycosyl hydrolase 47 family. Ca(2+) serves as cofactor.

The protein localises to the endoplasmic reticulum lumen. It carries out the reaction N(4)-(alpha-D-Man-(1-&gt;2)-alpha-D-Man-(1-&gt;2)-alpha-D-Man-(1-&gt;3)-[alpha-D-Man-(1-&gt;2)-alpha-D-Man-(1-&gt;3)-[alpha-D-Man-(1-&gt;2)-alpha-D-Man-(1-&gt;6)]-alpha-D-Man-(1-&gt;6)]-beta-D-Man-(1-&gt;4)-beta-D-GlcNAc-(1-&gt;4)-beta-D-GlcNAc)-L-asparaginyl-[protein] (N-glucan mannose isomer 9A1,2,3B1,2,3) + 4 H2O = N(4)-(alpha-D-Man-(1-&gt;3)-[alpha-D-Man-(1-&gt;3)-[alpha-D-Man-(1-&gt;6)]-alpha-D-Man-(1-&gt;6)]-beta-D-Man-(1-&gt;4)-beta-D-GlcNAc-(1-&gt;4)-beta-D-GlcNAc)-L-asparaginyl-[protein] (N-glucan mannose isomer 5A1,2) + 4 beta-D-mannose. It catalyses the reaction N(4)-(alpha-D-Man-(1-&gt;2)-alpha-D-Man-(1-&gt;2)-alpha-D-Man-(1-&gt;3)-[alpha-D-Man-(1-&gt;3)-[alpha-D-Man-(1-&gt;2)-alpha-D-Man-(1-&gt;6)]-alpha-D-Man-(1-&gt;6)]-beta-D-Man-(1-&gt;4)-beta-D-GlcNAc-(1-&gt;4)-beta-D-GlcNAc)-L-asparaginyl-[protein] (N-glucan mannose isomer 8A1,2,3B1,3) + 3 H2O = N(4)-(alpha-D-Man-(1-&gt;3)-[alpha-D-Man-(1-&gt;3)-[alpha-D-Man-(1-&gt;6)]-alpha-D-Man-(1-&gt;6)]-beta-D-Man-(1-&gt;4)-beta-D-GlcNAc-(1-&gt;4)-beta-D-GlcNAc)-L-asparaginyl-[protein] (N-glucan mannose isomer 5A1,2) + 3 beta-D-mannose. Its pathway is protein modification; protein glycosylation. In terms of biological role, involved in endoplasmic reticulum-associated degradation (ERAD). Accelerates the glycoprotein ERAD by proteasomes, by catalyzing mannose trimming from Man8GlcNAc2 to Man7GlcNAc2 in the N-glycans. May also participate in mannose trimming from all glycoproteins and not just misfolded ones targeted to ERAD. May have alpha 1,2-mannosidase activity. In Homo sapiens (Human), this protein is ER degradation-enhancing alpha-mannosidase-like protein 3 (EDEM3).